A 181-amino-acid polypeptide reads, in one-letter code: ATP synthase subunit b (181 aa).

The helical transmembrane segment at 16-36 (LIPPIPELVIGLIAFVIVFGF) threads the bilayer.

This sequence belongs to the ATPase B chain family. In terms of assembly, F-type ATPases have 2 components, F(1) - the catalytic core - and F(0) - the membrane proton channel. F(1) has five subunits: alpha(3), beta(3), gamma(1), delta(1), epsilon(1). F(0) has three main subunits: a(1), b(2) and c(10-14). The alpha and beta chains form an alternating ring which encloses part of the gamma chain. F(1) is attached to F(0) by a central stalk formed by the gamma and epsilon chains, while a peripheral stalk is formed by the delta and b chains.

It localises to the cell membrane. Its function is as follows. F(1)F(0) ATP synthase produces ATP from ADP in the presence of a proton or sodium gradient. F-type ATPases consist of two structural domains, F(1) containing the extramembraneous catalytic core and F(0) containing the membrane proton channel, linked together by a central stalk and a peripheral stalk. During catalysis, ATP synthesis in the catalytic domain of F(1) is coupled via a rotary mechanism of the central stalk subunits to proton translocation. In terms of biological role, component of the F(0) channel, it forms part of the peripheral stalk, linking F(1) to F(0). The polypeptide is ATP synthase subunit b (Streptomyces lividans).